The following is a 440-amino-acid chain: Xylose isomerase (440 aa).

Catalysis depends on residues histidine 100 and aspartate 103. Residues glutamate 231, glutamate 267, histidine 270, aspartate 295, aspartate 306, aspartate 308, and aspartate 338 each contribute to the Mg(2+) site.

It belongs to the xylose isomerase family. Homotetramer. It depends on Mg(2+) as a cofactor.

The protein localises to the cytoplasm. It carries out the reaction alpha-D-xylose = alpha-D-xylulofuranose. The chain is Xylose isomerase from Burkholderia cenocepacia (strain ATCC BAA-245 / DSM 16553 / LMG 16656 / NCTC 13227 / J2315 / CF5610) (Burkholderia cepacia (strain J2315)).